The sequence spans 113 residues: RING-box protein 2 (113 aa).

Positions 1–26 (MADVEDGEETCALASHSGSSGSKSGG) are disordered. A2 is modified (N-acetylalanine). Residue T10 is modified to Phosphothreonine; by CK2. Zn(2+) is bound by residues C50, C53, C61, C64, C73, C80, H82, H85, C87, C88, C99, and C102. The RING-type zinc finger occupies 61-103 (CLRCQAENKQEDCVVVWGECNHSFHNCCMSLWVKQNNRCPLCQ).

This sequence belongs to the RING-box family. As to quaternary structure, catalytic component of multiple cullin-5-RING E3 ubiquitin-protein ligase complexes (ECS complexes, also named CRL5 complexes) composed of CUL5, Elongin BC (ELOB and ELOC), RNF7/RBX2 and a variable SOCS box domain-containing protein as substrate-specific recognition component. Also interacts (with lower preference) with CUL1, CUL2, CUL3, CUL4A and CUL4B; additional evidence is however required to confirm this result in vivo. Interacts with UBE2F. Interacts with CSNK2B, the interaction is not affected by phosphorylation by CK2. May also interact with DCUN1D1, DCUN1D2, DCUN1D3, DCUN1D4 and DCUN1D5. In terms of assembly, (Microbial infection) Following infection by HIV-1 virus, component of a cullin-5-RING E3 ubiquitin-protein ligase complex (ECS complex) hijacked by the HIV-1 Vif protein. Phosphorylation at Thr-10 by CK2 promotes its degradation by the proteasome. Expressed in heart, liver, skeletal muscle and pancreas. At very low levels expressed in brain, placenta and lung.

The protein resides in the cytoplasm. It localises to the nucleus. The catalysed reaction is S-ubiquitinyl-[E2 ubiquitin-conjugating enzyme]-L-cysteine + [acceptor protein]-L-lysine = [E2 ubiquitin-conjugating enzyme]-L-cysteine + N(6)-ubiquitinyl-[acceptor protein]-L-lysine.. It catalyses the reaction S-[NEDD8-protein]-yl-[E2 NEDD8-conjugating enzyme]-L-cysteine + [cullin]-L-lysine = [E2 NEDD8-conjugating enzyme]-L-cysteine + N(6)-[NEDD8-protein]-yl-[cullin]-L-lysine.. It functions in the pathway protein modification; protein ubiquitination. The protein operates within protein modification; protein neddylation. Functionally, catalytic component of multiple cullin-5-RING E3 ubiquitin-protein ligase complexes (ECS complexes), which mediate the ubiquitination and subsequent proteasomal degradation of target proteins. It is thereby involved in various biological processes, such as cell cycle progression, signal transduction and transcription. The functional specificity of the E3 ubiquitin-protein ligase ECS complexes depend on the variable SOCS box-containing substrate recognition component. Within ECS complexes, RNF7/RBX2 recruits the E2 ubiquitination enzyme to the complex via its RING-type and brings it into close proximity to the substrate. Catalytic subunit of various SOCS-containing ECS complexes, such as the ECS(SOCS7) complex, that regulate reelin signaling by mediating ubiquitination and degradation of DAB1. The ECS(SOCS2) complex mediates the ubiquitination and subsequent proteasomal degradation of phosphorylated EPOR and GHR. Promotes ubiquitination and degradation of NF1, thereby regulating Ras protein signal transduction. As part of the ECS(ASB9) complex, catalyzes ubiquitination and degradation of CKB. The ECS(SPSB3) complex catalyzes ubiquitination of nuclear CGAS. As part of the ECS(RAB40C) complex, mediates ANKRD28 ubiquitination and degradation, thereby inhibiting protein phosphatase 6 (PP6) complex activity and focal adhesion assembly during cell migration. As part of some ECS complex, catalyzes 'Lys-11'-linked ubiquitination and degradation of BTRC. ECS complexes and ARIH2 collaborate in tandem to mediate ubiquitination of target proteins; ARIH2 mediating addition of the first ubiquitin on CRLs targets. Specifically catalyzes the neddylation of CUL5 via its interaction with UBE2F. Does not catalyze neddylation of other cullins (CUL1, CUL2, CUL3, CUL4A or CUL4B). May play a role in protecting cells from apoptosis induced by redox agents. In terms of biological role, inactive. Its function is as follows. (Microbial infection) Following infection by HIV-1 virus, catalytic component of a cullin-5-RING E3 ubiquitin-protein ligase complex (ECS complex) hijacked by the HIV-1 Vif protein, which catalyzes ubiquitination and degradation of APOBEC3F and APOBEC3G. This chain is RING-box protein 2, found in Homo sapiens (Human).